The primary structure comprises 115 residues: Transmembrane protein 14C (115 aa).

The next 4 membrane-spanning stretches (helical) occupy residues 8 to 28 (LVPL…GGII), 33 to 53 (AGSV…GLGA), 63 to 83 (VWVF…RFYN), and 88 to 108 (MPAG…VAKI).

Belongs to the TMEM14 family.

Its subcellular location is the mitochondrion membrane. Its function is as follows. Required for normal heme biosynthesis. This is Transmembrane protein 14C (Tmem14c) from Rattus norvegicus (Rat).